We begin with the raw amino-acid sequence, 257 residues long: 5'-nucleotidase SurE (257 aa).

A divalent metal cation is bound by residues D9, D10, S40, and N92.

Belongs to the SurE nucleotidase family. Requires a divalent metal cation as cofactor.

The protein localises to the cytoplasm. It catalyses the reaction a ribonucleoside 5'-phosphate + H2O = a ribonucleoside + phosphate. Nucleotidase that shows phosphatase activity on nucleoside 5'-monophosphates. In Alkalilimnicola ehrlichii (strain ATCC BAA-1101 / DSM 17681 / MLHE-1), this protein is 5'-nucleotidase SurE.